Consider the following 148-residue polypeptide: Macrodomain Ter protein (148 aa).

This sequence belongs to the MatP family. In terms of assembly, homodimer.

It localises to the cytoplasm. In terms of biological role, required for spatial organization of the terminus region of the chromosome (Ter macrodomain) during the cell cycle. Prevents early segregation of duplicated Ter macrodomains during cell division. Binds specifically to matS, which is a 13 bp signature motif repeated within the Ter macrodomain. This is Macrodomain Ter protein from Pasteurella multocida (strain Pm70).